A 420-amino-acid polypeptide reads, in one-letter code: Bile acid-CoA:amino acid N-acyltransferase (420 aa).

Position 40 is an N6-succinyllysine (K40). S125 is modified (phosphoserine). Residues C235 and D328 each act as charge relay system in the active site. Residues K346 and K350 each carry the N6-succinyllysine modification. The active-site Charge relay system is H362. K409 carries the N6-succinyllysine modification. Residue S418 is modified to Phosphoserine.

Belongs to the C/M/P thioester hydrolase family. In terms of assembly, monomer. As to expression, highly expressed in liver, kidney, gallbladder, proximal intestine and distal intestine. Weakly expressed in adrenal gland, lung, brain and muscle.

The protein localises to the cytoplasm. It localises to the cytosol. Its subcellular location is the peroxisome. It carries out the reaction choloyl-CoA + glycine = glycocholate + CoA + H(+). It catalyses the reaction hexadecanoyl-CoA + H2O = hexadecanoate + CoA + H(+). The catalysed reaction is choloyl-CoA + H2O = cholate + CoA + H(+). The enzyme catalyses chenodeoxycholoyl-CoA + H2O = chenodeoxycholate + CoA + H(+). It carries out the reaction eicosanoyl-CoA + H2O = eicosanoate + CoA + H(+). It catalyses the reaction octadecanoyl-CoA + H2O = octadecanoate + CoA + H(+). The catalysed reaction is docosanoyl-CoA + H2O = docosanoate + CoA + H(+). The enzyme catalyses tetracosanoyl-CoA + H2O = tetracosanoate + CoA + H(+). It carries out the reaction hexacosanoyl-CoA + H2O = hexacosanoate + CoA + H(+). It catalyses the reaction dodecanoyl-CoA + H2O = dodecanoate + CoA + H(+). The catalysed reaction is tetradecanoyl-CoA + H2O = tetradecanoate + CoA + H(+). The enzyme catalyses choloyl-CoA + taurine = taurocholate + CoA + H(+). It carries out the reaction chenodeoxycholoyl-CoA + glycine = glycochenodeoxycholate + CoA + H(+). It catalyses the reaction chenodeoxycholoyl-CoA + taurine = taurochenodeoxycholate + CoA + H(+). The catalysed reaction is eicosanoyl-CoA + glycine = N-eicosanoylglycinate + CoA + H(+). The enzyme catalyses hexacosanoyl-CoA + glycine = N-hexacosanoylglycine + CoA + H(+). It carries out the reaction docosanoyl-CoA + glycine = N-docosanoylglycine + CoA + H(+). Catalyzes the amidation of bile acids (BAs) with the amino acid taurine. Selective for taurine conjugation of cholyl CoA and only taurine-conjugated BAs are found in bile. Amidation of BAs in the liver with taurine prior to their excretion into bile is an important biochemical event in bile acid metabolism. This conjugation (or amidation) plays several important biological roles in that it promotes the secretion of BAs and cholesterol into bile and increases the detergent properties of BAs in the intestine, which facilitates lipid and vitamin absorption. May also act as an acyl-CoA thioesterase that regulates intracellular levels of free fatty acids. In vitro, catalyzes the hydrolysis of long- and very long-chain saturated acyl-CoAs to the free fatty acid and coenzyme A (CoASH), and conjugates glycine to these acyl-CoAs. The chain is Bile acid-CoA:amino acid N-acyltransferase (Baat) from Mus musculus (Mouse).